Consider the following 552-residue polypeptide: Glutamine--tRNA ligase (552 aa).

The 'HIGH' region motif lies at 34 to 44 (PEPNGYLHIGH). Residues 35–37 (EPN) and 41–47 (HIGHAKS) contribute to the ATP site. Asp67 and Tyr212 together coordinate L-glutamine. ATP contacts are provided by residues Thr231, 261–262 (RL), and 269–271 (MSK). A 'KMSKS' region motif is present at residues 268-272 (LMSKR).

It belongs to the class-I aminoacyl-tRNA synthetase family. Monomer.

Its subcellular location is the cytoplasm. The enzyme catalyses tRNA(Gln) + L-glutamine + ATP = L-glutaminyl-tRNA(Gln) + AMP + diphosphate. This chain is Glutamine--tRNA ligase, found in Hamiltonella defensa subsp. Acyrthosiphon pisum (strain 5AT).